Here is a 693-residue protein sequence, read N- to C-terminus: Zinc finger protein 441 (693 aa).

Positions 4 to 79 (VAFEDVAINF…ERACEIKDNS (76 aa)) constitute a KRAB domain. Residues 169–190 (YDCKECASFSSLENLQRHMAAH) form a C2H2-type 1 zinc finger. Residues 196 to 218 (RICKLCGNAFIWPSLFHMLRRTH) form a C2H2-type 2; degenerate zinc finger. The segment at 224 to 246 (YEYEQCSTAFPAYSSTLRHERTH) adopts a C2H2-type 3; degenerate zinc-finger fold. The segment at 252–274 (YQCKQCGKAFSCSCYTQLYERTH) adopts a C2H2-type 4; degenerate zinc-finger fold. 15 C2H2-type zinc fingers span residues 280-302 (YECK…MIVH), 308-330 (HKCK…KRTH), 336-358 (YECK…MITH), 364-386 (HKCK…ETTH), 392-413 (YKCE…ETTH), 419-441 (YKCK…ERIH), 447-469 (YKCK…EKTH), 475-497 (YECK…MIMH), 503-525 (HKCK…ERIH), 531-553 (YKCK…ERTH), 559-581 (YGCQ…MITH), 587-609 (HKCK…ERTH), 615-637 (YECK…ERVH), 643-665 (YKCK…ERTH), and 671-693 (YKCK…EMTH).

It belongs to the krueppel C2H2-type zinc-finger protein family.

It is found in the nucleus. May be involved in transcriptional regulation. This Homo sapiens (Human) protein is Zinc finger protein 441 (ZNF441).